Reading from the N-terminus, the 544-residue chain is Intercellular adhesion molecule 3 (544 aa).

The N-terminal stretch at 1 to 31 (MIASGPPPRVYWTSLIFLLLACCLLPTGAQG) is a signal peptide. Residues 32-486 (QTYQVRVEPK…MMDVQGRNPV (455 aa)) lie on the Extracellular side of the membrane. An Ig-like C2-type 1 domain is found at 48 to 105 (GEPLVVNCTLDCPGPGLISLETALSKEPHSRGLGWAAFRLTNVTGDMEILCSGICNKS). N-linked (GlcNAc...) asparagine glycans are attached at residues Asn54, Asn89, Asn103, Asn112, Asn138, Asn190, Asn209, Asn243, Asn267, Asn296, Asn321, and Asn326. Intrachain disulfides connect Cys55–Cys98 and Cys59–Cys102. The Ig-like C2-type 2 domain occupies 134–200 (GEELNLSCLV…FSCRSELDLR (67 aa)). Cys141 and Cys193 are joined by a disulfide. One can recognise an Ig-like C2-type 3 domain in the interval 237–302 (ETSWPVNCSL…IVCNVTLGVE (66 aa)). Cys244 and Cys295 are joined by a disulfide. Residues 330 to 383 (GTPVTVTCAAGPQVQVMLDGVPAAVPGQPAQLQLKATEMDDRRTFFCNATLKVH) form the Ig-like C2-type 4 domain. An intrachain disulfide couples Cys337 to Cys376. Asn377, Asn390, and Asn456 each carry an N-linked (GlcNAc...) asparagine glycan. The region spanning 417 to 470 (KTMHILQCQARGNPNPQLQCLREGSKFKVPVGIPFLVLLNYSGTYSCQAASSRG) is the Ig-like C2-type 5 domain. Cys424 and Cys463 are oxidised to a cystine. The helical transmembrane segment at 487 to 511 (TINIVLGVLAILGLVTLAAASVYVF) threads the bilayer. At 512 to 544 (WVQRQHDIYHLTPRSTRWRLTSTQPVTVAEELS) the chain is on the cytoplasmic side.

Belongs to the immunoglobulin superfamily. ICAM family. As to quaternary structure, interacts with moesin/MSN. Leukocytes.

The protein localises to the membrane. Its function is as follows. ICAM proteins are ligands for the leukocyte adhesion protein LFA-1 (integrin alpha-L/beta-2). ICAM3 is also a ligand for integrin alpha-D/beta-2. In association with integrin alpha-L/beta-2, contributes to apoptotic neutrophil phagocytosis by macrophages. This chain is Intercellular adhesion molecule 3 (ICAM3), found in Bos taurus (Bovine).